Here is a 413-residue protein sequence, read N- to C-terminus: MLTMPIPEYLHEILDDVRDTTSGELADYIPELKSADPNPLAVALCTVNGHIYSAGDDDIEFTMQSISKPFAYALALQECGFDEVSASVALEPSGEAFNELSLDGENRPMNPMINAGAIAINQLINGSDSTVEDRVEKIRHYFSELAGRELTIDRVLAESELAGADRNLSIAHMLRNYGVIEDEAHDAVLSYTLQCAIKVTTRDLAVMTATLAAGGTHPITGKKLLDARVCRLTLSVMASAGMYDEAGQWLSTVGIPAKSGVAGGLIGILPGQLGIATFSPRLNPKGNSVRGVKIFKQLSDDMGLHLMSTEQVSGHAVRSITRDGDTTFIQMQGAMNFSASESFLHAIVEHNFEGTEVVLDLTRVLSFHPVAIRMIKEGLKRIRDAGFEVFILDPDDVLPDFMFSDGTICKERV.

The tract at residues 23 to 307 is glutaminase; that stretch reads GELADYIPEL…LSDDMGLHLM (285 aa). Residues Ser-65, Asn-114, Glu-160, Asn-167, Tyr-191, Tyr-243, and Val-261 each contribute to the substrate site. Residues 316–413 form the STAS domain; it reads AVRSITRDGD…SDGTICKERV (98 aa).

The protein belongs to the glutaminase family. Homotetramer.

The enzyme catalyses L-glutamine + H2O = L-glutamate + NH4(+). The sequence is that of Glutaminase (glsA) from Corynebacterium glutamicum (strain ATCC 13032 / DSM 20300 / JCM 1318 / BCRC 11384 / CCUG 27702 / LMG 3730 / NBRC 12168 / NCIMB 10025 / NRRL B-2784 / 534).